The following is an 87-amino-acid chain: Neurotoxin LmNaTx64.1 (87 aa).

The N-terminal stretch at 1–18 is a signal peptide; the sequence is MKILFLIILTAFFIGVHC. The LCN-type CS-alpha/beta domain occupies 19–85; sequence KHGYPIIRAG…TWSRATNKCK (67 aa). 4 disulfides stabilise this stretch: Cys-33/Cys-84, Cys-37/Cys-58, Cys-44/Cys-65, and Cys-48/Cys-67. Residue Cys-84 is modified to Cysteine amide.

This sequence belongs to the long (4 C-C) scorpion toxin superfamily. Sodium channel inhibitor family. Beta subfamily. As to expression, expressed by the venom gland.

It localises to the secreted. Its function is as follows. Binds voltage-independently at site-4 of sodium channels (Nav) and shift the voltage of activation toward more negative potentials thereby affecting sodium channel activation and promoting spontaneous and repetitive firing. This chain is Neurotoxin LmNaTx64.1, found in Lychas mucronatus (Chinese swimming scorpion).